The following is a 154-amino-acid chain: uncharacterized protein (154 aa).

A run of 2 helical transmembrane segments spans residues 54–74 (FLITNLIFFFAAFVALLIYLL) and 81–101 (FAFVFIAAIIFIIFYNIFFLS).

It is found in the cell membrane. This is an uncharacterized protein from Mycoplasma genitalium (strain ATCC 33530 / DSM 19775 / NCTC 10195 / G37) (Mycoplasmoides genitalium).